The following is a 296-amino-acid chain: 4-hydroxybenzoate octaprenyltransferase (296 aa).

8 helical membrane-spanning segments follow: residues Ile28–Ile48, Leu51–Ile71, Leu102–Leu122, Phe143–Phe163, Ala174–Met194, Phe212–Ala232, Val233–Leu253, and Phe274–Phe294.

Belongs to the UbiA prenyltransferase family. Mg(2+) serves as cofactor.

The protein localises to the cell inner membrane. It catalyses the reaction all-trans-octaprenyl diphosphate + 4-hydroxybenzoate = 4-hydroxy-3-(all-trans-octaprenyl)benzoate + diphosphate. The protein operates within cofactor biosynthesis; ubiquinone biosynthesis. Catalyzes the prenylation of para-hydroxybenzoate (PHB) with an all-trans polyprenyl group. Mediates the second step in the final reaction sequence of ubiquinone-8 (UQ-8) biosynthesis, which is the condensation of the polyisoprenoid side chain with PHB, generating the first membrane-bound Q intermediate 3-octaprenyl-4-hydroxybenzoate. This Neisseria meningitidis serogroup C (strain 053442) protein is 4-hydroxybenzoate octaprenyltransferase.